The chain runs to 424 residues: NADH-quinone oxidoreductase subunit H (424 aa).

Helical transmembrane passes span 11 to 31 (LVVAKAIAIFVFLMLTVLVAI), 79 to 99 (FVYFVAPIISVIPAFTAFAFI), 119 to 139 (LPVAVLFILGLSAIGVYGIVL), 160 to 180 (VISYEVAMGLSFAAVFLYAGS), 193 to 213 (VWYIFLLLPSFVIYLISMVGE), 255 to 275 (VSALAATLFLGGWHAPWPLNL), 283 to 303 (WWPVLWFTAKVWGFLFMYFWL), 317 to 337 (ALGWKLLIPVSLVWVLIAAVI), and 347 to 367 (YWTPALVVSSIVVAAILVMSL). The interval 376 to 424 (AVTKARRRGKQPAAGPDEQGALEPLFPTPPLPMKPLAQPVGASKENARG) is disordered.

Belongs to the complex I subunit 1 family. In terms of assembly, NDH-1 is composed of 14 different subunits. Subunits NuoA, H, J, K, L, M, N constitute the membrane sector of the complex.

Its subcellular location is the cell membrane. It carries out the reaction a quinone + NADH + 5 H(+)(in) = a quinol + NAD(+) + 4 H(+)(out). In terms of biological role, NDH-1 shuttles electrons from NADH, via FMN and iron-sulfur (Fe-S) centers, to quinones in the respiratory chain. The immediate electron acceptor for the enzyme in this species is believed to be menaquinone. Couples the redox reaction to proton translocation (for every two electrons transferred, four hydrogen ions are translocated across the cytoplasmic membrane), and thus conserves the redox energy in a proton gradient. This subunit may bind ubiquinone. This chain is NADH-quinone oxidoreductase subunit H, found in Mycobacterium ulcerans (strain Agy99).